Consider the following 119-residue polypeptide: Immunoglobulin heavy variable 2-26 (119 aa).

The first 19 residues, 1–19, serve as a signal peptide directing secretion; it reads MDTLCYTLLLLTTPSWVLS. Residue glutamine 20 is modified to Pyrrolidone carboxylic acid. The tract at residues 20 to 44 is framework-1; it reads QVTLKESGPVLVKPTETLTLTCTVS. In terms of domain architecture, Ig-like spans 20-119; the sequence is QVTLKESGPV…DTATYYCARI (100 aa). A disulfide bridge links cysteine 41 with cysteine 116. The segment at 45–54 is complementarity-determining-1; that stretch reads GFSLSNARMG. The tract at residues 55 to 71 is framework-2; the sequence is VSWIRQPPGKALEWLAH. The complementarity-determining-2 stretch occupies residues 72-78; it reads IFSNDEK. Residues 79 to 116 form a framework-3 region; that stretch reads SYSTSLKSRLTISKDTSKSQVVLTMTNMDPVDTATYYC. Residues 117–119 are complementarity-determining-3; sequence ARI.

As to quaternary structure, immunoglobulins are composed of two identical heavy chains and two identical light chains; disulfide-linked.

Its subcellular location is the secreted. The protein resides in the cell membrane. Functionally, v region of the variable domain of immunoglobulin heavy chains that participates in the antigen recognition. Immunoglobulins, also known as antibodies, are membrane-bound or secreted glycoproteins produced by B lymphocytes. In the recognition phase of humoral immunity, the membrane-bound immunoglobulins serve as receptors which, upon binding of a specific antigen, trigger the clonal expansion and differentiation of B lymphocytes into immunoglobulins-secreting plasma cells. Secreted immunoglobulins mediate the effector phase of humoral immunity, which results in the elimination of bound antigens. The antigen binding site is formed by the variable domain of one heavy chain, together with that of its associated light chain. Thus, each immunoglobulin has two antigen binding sites with remarkable affinity for a particular antigen. The variable domains are assembled by a process called V-(D)-J rearrangement and can then be subjected to somatic hypermutations which, after exposure to antigen and selection, allow affinity maturation for a particular antigen. The chain is Immunoglobulin heavy variable 2-26 from Homo sapiens (Human).